Here is a 338-residue protein sequence, read N- to C-terminus: Holliday junction branch migration complex subunit RuvB (338 aa).

The tract at residues 1–184 (MTEEERLLSA…FGIISHMEYY (184 aa)) is large ATPase domain (RuvB-L). Residues leucine 23, arginine 24, glycine 65, lysine 68, threonine 69, threonine 70, 131 to 133 (EDF), arginine 174, tyrosine 184, and arginine 221 each bind ATP. Residue threonine 69 coordinates Mg(2+). A small ATPAse domain (RuvB-S) region spans residues 185 to 255 (QEQDLKEIVL…IADKALTLLQ (71 aa)). The segment at 258 to 338 (HQGLDYVDQK…GYDYLEGRKN (81 aa)) is head domain (RuvB-H). Residues arginine 313 and arginine 318 each coordinate DNA.

Belongs to the RuvB family. As to quaternary structure, homohexamer. Forms an RuvA(8)-RuvB(12)-Holliday junction (HJ) complex. HJ DNA is sandwiched between 2 RuvA tetramers; dsDNA enters through RuvA and exits via RuvB. An RuvB hexamer assembles on each DNA strand where it exits the tetramer. Each RuvB hexamer is contacted by two RuvA subunits (via domain III) on 2 adjacent RuvB subunits; this complex drives branch migration. In the full resolvosome a probable DNA-RuvA(4)-RuvB(12)-RuvC(2) complex forms which resolves the HJ.

It is found in the cytoplasm. It catalyses the reaction ATP + H2O = ADP + phosphate + H(+). Functionally, the RuvA-RuvB-RuvC complex processes Holliday junction (HJ) DNA during genetic recombination and DNA repair, while the RuvA-RuvB complex plays an important role in the rescue of blocked DNA replication forks via replication fork reversal (RFR). RuvA specifically binds to HJ cruciform DNA, conferring on it an open structure. The RuvB hexamer acts as an ATP-dependent pump, pulling dsDNA into and through the RuvAB complex. RuvB forms 2 homohexamers on either side of HJ DNA bound by 1 or 2 RuvA tetramers; 4 subunits per hexamer contact DNA at a time. Coordinated motions by a converter formed by DNA-disengaged RuvB subunits stimulates ATP hydrolysis and nucleotide exchange. Immobilization of the converter enables RuvB to convert the ATP-contained energy into a lever motion, pulling 2 nucleotides of DNA out of the RuvA tetramer per ATP hydrolyzed, thus driving DNA branch migration. The RuvB motors rotate together with the DNA substrate, which together with the progressing nucleotide cycle form the mechanistic basis for DNA recombination by continuous HJ branch migration. Branch migration allows RuvC to scan DNA until it finds its consensus sequence, where it cleaves and resolves cruciform DNA. This is Holliday junction branch migration complex subunit RuvB from Enterococcus faecalis (strain ATCC 700802 / V583).